A 188-amino-acid polypeptide reads, in one-letter code: ATP-dependent protease subunit HslV (188 aa).

Residue Thr7 is part of the active site. Residues Gly162, Cys165, and Ser168 each coordinate Na(+).

This sequence belongs to the peptidase T1B family. HslV subfamily. As to quaternary structure, a double ring-shaped homohexamer of HslV is capped on each side by a ring-shaped HslU homohexamer. The assembly of the HslU/HslV complex is dependent on binding of ATP.

The protein resides in the cytoplasm. The enzyme catalyses ATP-dependent cleavage of peptide bonds with broad specificity.. With respect to regulation, allosterically activated by HslU binding. Functionally, protease subunit of a proteasome-like degradation complex believed to be a general protein degrading machinery. This chain is ATP-dependent protease subunit HslV, found in Thiobacillus denitrificans (strain ATCC 25259 / T1).